We begin with the raw amino-acid sequence, 406 residues long: Leu/Ile/Val-binding protein homolog 5 (406 aa).

Positions 1–29 are cleaved as a signal peptide; sequence MIGTRLPAWTRVLACGVAGLSLMTISAKA.

Belongs to the leucine-binding protein family.

In terms of biological role, component of an amino-acid transport system. The protein is Leu/Ile/Val-binding protein homolog 5 of Brucella suis biovar 1 (strain 1330).